The primary structure comprises 447 residues: UDP-N-acetylmuramate--L-alanine ligase (447 aa).

An ATP-binding site is contributed by 107 to 113 (GTHGKTT).

This sequence belongs to the MurCDEF family.

The protein localises to the cytoplasm. The catalysed reaction is UDP-N-acetyl-alpha-D-muramate + L-alanine + ATP = UDP-N-acetyl-alpha-D-muramoyl-L-alanine + ADP + phosphate + H(+). Its pathway is cell wall biogenesis; peptidoglycan biosynthesis. In terms of biological role, cell wall formation. This Rubrobacter xylanophilus (strain DSM 9941 / JCM 11954 / NBRC 16129 / PRD-1) protein is UDP-N-acetylmuramate--L-alanine ligase.